The chain runs to 326 residues: Protein GVP36 (326 aa).

S2 is modified (N-acetylserine). Position 2 is a phosphoserine (S2). Glycyl lysine isopeptide (Lys-Gly) (interchain with G-Cter in ubiquitin) cross-links involve residues K13, K305, and K313. A disordered region spans residues 299-326; the sequence is AEEPEAKPEVAEEEKPQTAISMNDEDDA. Residues 302–314 show a composition bias toward basic and acidic residues; that stretch reads PEAKPEVAEEEKP. S319 is subject to Phosphoserine.

It localises to the golgi apparatus membrane. This is Protein GVP36 (GVP36) from Saccharomyces cerevisiae (strain ATCC 204508 / S288c) (Baker's yeast).